The sequence spans 355 residues: Green-sensitive opsin-1 (355 aa).

Residues 1-49 are Extracellular-facing; the sequence is MAAHADEPVFAARRYNEETTRESAFVYTNANNTRDPFEGPNYHIAPRWV. N-linked (GlcNAc...) asparagine glycosylation is present at asparagine 31. Residues 50–74 form a helical membrane-spanning segment; that stretch reads YNLASLWMIIVVIASIFTNSLVIVA. Residues 75 to 86 lie on the Cytoplasmic side of the membrane; it reads TAKFKKLRHPLN. A helical transmembrane segment spans residues 87–112; that stretch reads WILVNLAIADLGETVLASTISVFNQV. The Extracellular portion of the chain corresponds to 113–126; the sequence is FGYFVLGHPMCIFE. Cysteine 123 and cysteine 200 form a disulfide bridge. Residues 127–146 traverse the membrane as a helical segment; it reads GWTVSVCGITALWSLTIISW. Over 147–165 the chain is Cytoplasmic; it reads ERWVVVCKPFGNVKFDGKW. The chain crosses the membrane as a helical span at residues 166–189; sequence AAGGIIFAWTWAIIWCTPPIFGWS. At 190–215 the chain is on the extracellular side; the sequence is RYWPHGLKTSCGPDVFSGSEDPGVAS. The helical transmembrane segment at 216–243 threads the bilayer; sequence YMVTLLLTCCILPLSVIIICYIFVWNAI. The Cytoplasmic portion of the chain corresponds to 244 to 265; the sequence is HQVAQQQKDSESTQKAEKEVSR. A helical transmembrane segment spans residues 266 to 289; that stretch reads MVVVMILAFILCWGPYASFATFSA. Over 290–297 the chain is Extracellular; the sequence is LNPGYAWH. The chain crosses the membrane as a helical span at residues 298-322; sequence PLAAALPAYFAKSATIYNPIIYVFM. An N6-(retinylidene)lysine modification is found at lysine 309. Over 323–355 the chain is Cytoplasmic; it reads NRQFRSCIMQLFGKKVEDASEVSGSTTEVSTAS.

The protein belongs to the G-protein coupled receptor 1 family. Opsin subfamily. As to expression, the color pigments are found in the cone photoreceptor cells.

The protein localises to the membrane. In terms of biological role, visual pigments are the light-absorbing molecules that mediate vision. They consist of an apoprotein, opsin, covalently linked to cis-retinal. This Psalidodon fasciatus (Banded astyanax) protein is Green-sensitive opsin-1 (G103).